Here is a 318-residue protein sequence, read N- to C-terminus: Acetyl-coenzyme A carboxylase carboxyl transferase subunit alpha (318 aa).

A CoA carboxyltransferase C-terminal domain is found at Asp-31–Leu-292.

The protein belongs to the AccA family. In terms of assembly, acetyl-CoA carboxylase is a heterohexamer composed of biotin carboxyl carrier protein (AccB), biotin carboxylase (AccC) and two subunits each of ACCase subunit alpha (AccA) and ACCase subunit beta (AccD).

The protein resides in the cytoplasm. The catalysed reaction is N(6)-carboxybiotinyl-L-lysyl-[protein] + acetyl-CoA = N(6)-biotinyl-L-lysyl-[protein] + malonyl-CoA. It participates in lipid metabolism; malonyl-CoA biosynthesis; malonyl-CoA from acetyl-CoA: step 1/1. In terms of biological role, component of the acetyl coenzyme A carboxylase (ACC) complex. First, biotin carboxylase catalyzes the carboxylation of biotin on its carrier protein (BCCP) and then the CO(2) group is transferred by the carboxyltransferase to acetyl-CoA to form malonyl-CoA. In Hydrogenovibrio crunogenus (strain DSM 25203 / XCL-2) (Thiomicrospira crunogena), this protein is Acetyl-coenzyme A carboxylase carboxyl transferase subunit alpha.